The primary structure comprises 133 residues: MAGGQRLKRMADSVQRELSELIRQELKDPRLGGLVTISGVKVSPDLGYADVYVTVMGRELSDDQNEVAHRETLDILNKASGFLRQELSRRIKTRITPRLRFHYDKTNAYGNYMFGLIEKAVQDLPKRESDDKE.

The protein belongs to the RbfA family. In terms of assembly, monomer. Binds 30S ribosomal subunits, but not 50S ribosomal subunits or 70S ribosomes.

The protein resides in the cytoplasm. Functionally, one of several proteins that assist in the late maturation steps of the functional core of the 30S ribosomal subunit. Associates with free 30S ribosomal subunits (but not with 30S subunits that are part of 70S ribosomes or polysomes). Required for efficient processing of 16S rRNA. May interact with the 5'-terminal helix region of 16S rRNA. The chain is Ribosome-binding factor A from Acinetobacter baumannii (strain ACICU).